A 530-amino-acid chain; its full sequence is Protein SLOW WALKER 1 (530 aa).

WD repeat units lie at residues 50–89 (NLVS…SSRR), 91–130 (SFRD…ALRT), 133–173 (SHSA…VISD), 176–216 (GHKD…SNWI), 220–258 (NHGL…KMVC), 262–304 (SHNK…VTYS), and 320–363 (GSTR…DESR). The short motif at 392–399 (EKKGLKLT) is the Nuclear localization signal element.

Expressed in cells undergoing active cell divisions, including functional megaspores and the female gametophytic cells. Accumulates in roots, stems, leaves, inflorescences and siliques.

Its subcellular location is the nucleus. It localises to the nucleolus. Its function is as follows. Essential protein required for nuclear division and organization during embryo sac development in female gametophyte, probably by promoting rRNA biogenesis essential for the progression of the mitotic division cycles during gametogenesis. Involved in nucleolar processing of pre-18S ribosomal RNA. The sequence is that of Protein SLOW WALKER 1 from Arabidopsis thaliana (Mouse-ear cress).